Consider the following 315-residue polypeptide: Lipoyl synthase (315 aa).

Residues Cys-63, Cys-68, Cys-74, Cys-89, Cys-93, Cys-96, and Ser-303 each coordinate [4Fe-4S] cluster. Residues 75-292 (FSKGTATFMI…EEKAYEMGFV (218 aa)) form the Radical SAM core domain.

Belongs to the radical SAM superfamily. Lipoyl synthase family. The cofactor is [4Fe-4S] cluster.

Its subcellular location is the cytoplasm. It carries out the reaction [[Fe-S] cluster scaffold protein carrying a second [4Fe-4S](2+) cluster] + N(6)-octanoyl-L-lysyl-[protein] + 2 oxidized [2Fe-2S]-[ferredoxin] + 2 S-adenosyl-L-methionine + 4 H(+) = [[Fe-S] cluster scaffold protein] + N(6)-[(R)-dihydrolipoyl]-L-lysyl-[protein] + 4 Fe(3+) + 2 hydrogen sulfide + 2 5'-deoxyadenosine + 2 L-methionine + 2 reduced [2Fe-2S]-[ferredoxin]. Its pathway is protein modification; protein lipoylation via endogenous pathway; protein N(6)-(lipoyl)lysine from octanoyl-[acyl-carrier-protein]: step 2/2. Catalyzes the radical-mediated insertion of two sulfur atoms into the C-6 and C-8 positions of the octanoyl moiety bound to the lipoyl domains of lipoate-dependent enzymes, thereby converting the octanoylated domains into lipoylated derivatives. This Chromobacterium violaceum (strain ATCC 12472 / DSM 30191 / JCM 1249 / CCUG 213 / NBRC 12614 / NCIMB 9131 / NCTC 9757 / MK) protein is Lipoyl synthase.